The chain runs to 428 residues: Putative oxidoreductase YteT (428 aa).

The signal sequence occupies residues 1 to 23; it reads MKNIVFCGLSSRAFSMFIKPLME.

Belongs to the Gfo/Idh/MocA family.

Functionally, may play a role in the degradation of type I rhamnogalacturonan derived from plant cell walls. The sequence is that of Putative oxidoreductase YteT (yteT) from Bacillus subtilis (strain 168).